Here is a 371-residue protein sequence, read N- to C-terminus: MIASYHRPTTALVHLDRIKFNIEQVQHHIPKSAKTFAVVKANAYGHGAVQVAQAIQKQVDGFCVSNLDEALELRQAGLNDFILILGVLLPEEVALAKKENITITVADLDWFDKVQTENIDLAGLSVHVKVDSGMGRIGVRSTAEANQLIAGLQKAGATVNGIFTHFATADEASTVKFSQQLEMFTTLISQLDYKPQTVHASNSATSIWHSDTVMNAVRLGIVMYGLNPSGNALELPYEVKPALELTSALVQVKEVQAGDTVGYGATYTASQAEIIGTVPVGYADGWTRDLQGFHVLVNGHYCEIVGRVSMDQITIRLPKAYPLGTKVTLIGQDGHETISATDVAEKRETINYEVLCLISDRVPRKYDKKFS.

Lysine 40 serves as the catalytic Proton acceptor; specific for D-alanine. Lysine 40 bears the N6-(pyridoxal phosphate)lysine mark. A substrate-binding site is contributed by arginine 136. The Proton acceptor; specific for L-alanine role is filled by tyrosine 263. Methionine 310 is a binding site for substrate.

It belongs to the alanine racemase family. Requires pyridoxal 5'-phosphate as cofactor.

The enzyme catalyses L-alanine = D-alanine. The protein operates within amino-acid biosynthesis; D-alanine biosynthesis; D-alanine from L-alanine: step 1/1. Catalyzes the interconversion of L-alanine and D-alanine. May also act on other amino acids. This is Alanine racemase (alr) from Streptococcus mutans serotype c (strain ATCC 700610 / UA159).